The primary structure comprises 347 residues: UDP-N-acetylenolpyruvoylglucosamine reductase (347 aa).

Residues 15–187 form the FAD-binding PCMH-type domain; the sequence is FGIEQTCSYL…TAIGLKLPKR (173 aa). Residue R163 is part of the active site. S233 (proton donor) is an active-site residue. E328 is a catalytic residue.

It belongs to the MurB family. It depends on FAD as a cofactor.

It is found in the cytoplasm. It catalyses the reaction UDP-N-acetyl-alpha-D-muramate + NADP(+) = UDP-N-acetyl-3-O-(1-carboxyvinyl)-alpha-D-glucosamine + NADPH + H(+). It participates in cell wall biogenesis; peptidoglycan biosynthesis. Functionally, cell wall formation. This is UDP-N-acetylenolpyruvoylglucosamine reductase from Vibrio parahaemolyticus serotype O3:K6 (strain RIMD 2210633).